The sequence spans 382 residues: 8-amino-7-oxononanoate synthase (382 aa).

A substrate-binding site is contributed by arginine 26. 104 to 105 (GY) is a binding site for pyridoxal 5'-phosphate. Substrate is bound at residue histidine 129. Pyridoxal 5'-phosphate contacts are provided by residues serine 175, 200–203 (DEAH), and 232–235 (TLSK). Residue lysine 235 is modified to N6-(pyridoxal phosphate)lysine. Threonine 345 lines the substrate pocket.

The protein belongs to the class-II pyridoxal-phosphate-dependent aminotransferase family. BioF subfamily. Homodimer. It depends on pyridoxal 5'-phosphate as a cofactor.

The catalysed reaction is 6-carboxyhexanoyl-[ACP] + L-alanine + H(+) = (8S)-8-amino-7-oxononanoate + holo-[ACP] + CO2. It functions in the pathway cofactor biosynthesis; biotin biosynthesis. Catalyzes the decarboxylative condensation of pimeloyl-[acyl-carrier protein] and L-alanine to produce 8-amino-7-oxononanoate (AON), [acyl-carrier protein], and carbon dioxide. The sequence is that of 8-amino-7-oxononanoate synthase (bioF) from Mycolicibacterium smegmatis (strain ATCC 700084 / mc(2)155) (Mycobacterium smegmatis).